The primary structure comprises 364 residues: Aminomethyltransferase (364 aa).

The protein belongs to the GcvT family. In terms of assembly, the glycine cleavage system is composed of four proteins: P, T, L and H.

It carries out the reaction N(6)-[(R)-S(8)-aminomethyldihydrolipoyl]-L-lysyl-[protein] + (6S)-5,6,7,8-tetrahydrofolate = N(6)-[(R)-dihydrolipoyl]-L-lysyl-[protein] + (6R)-5,10-methylene-5,6,7,8-tetrahydrofolate + NH4(+). The glycine cleavage system catalyzes the degradation of glycine. This chain is Aminomethyltransferase, found in Geobacillus kaustophilus (strain HTA426).